The following is a 270-amino-acid chain: Orotidine 5'-phosphate decarboxylase (270 aa).

Lys95 serves as the catalytic Proton donor.

It belongs to the OMP decarboxylase family. Type 2 subfamily.

The enzyme catalyses orotidine 5'-phosphate + H(+) = UMP + CO2. It functions in the pathway pyrimidine metabolism; UMP biosynthesis via de novo pathway; UMP from orotate: step 2/2. The protein is Orotidine 5'-phosphate decarboxylase of Dechloromonas aromatica (strain RCB).